The sequence spans 453 residues: Tubulin delta chain (453 aa).

143 to 149 (AGGTGSG) provides a ligand contact to GTP.

The protein belongs to the tubulin family. In terms of assembly, found in a complex with TEDC1, TEDC2, TUBE1 and TUBD1.

The protein localises to the nucleus. Its subcellular location is the cytoplasm. It is found in the cytoskeleton. The protein resides in the microtubule organizing center. It localises to the centrosome. The protein localises to the centriole. Its subcellular location is the cell projection. It is found in the cilium. Its function is as follows. Acts as a positive regulator of hedgehog signaling and regulates ciliary function. This Homo sapiens (Human) protein is Tubulin delta chain (TUBD1).